We begin with the raw amino-acid sequence, 228 residues long: 5'(3')-deoxyribonucleotidase, mitochondrial (228 aa).

A mitochondrion-targeting transit peptide spans 1 to 31 (MIRLGGWCARRLCSAAVPAGRRGAAGGLGLA). The Nucleophile role is filled by D41. Residues D41 and D43 each coordinate Mg(2+). Residue D43 is the Proton donor of the active site. Residues D43, F49, F75, W76, V77, W96, T130, and K165 each contribute to the substrate site. Residue D176 coordinates Mg(2+).

It belongs to the 5'(3')-deoxyribonucleotidase family. In terms of assembly, homodimer. Requires Mg(2+) as cofactor. In terms of tissue distribution, highly expressed in heart, brain and skeletal muscle. Detected at very low levels in kidney and pancreas.

The protein resides in the mitochondrion. Dephosphorylates specifically the 5' and 2'(3')-phosphates of uracil and thymine deoxyribonucleotides, and so protects mitochondrial DNA replication from excess dTTP. Has only marginal activity towards dIMP and dGMP. In Homo sapiens (Human), this protein is 5'(3')-deoxyribonucleotidase, mitochondrial (NT5M).